Consider the following 726-residue polypeptide: Peroxisomal fatty acid beta-oxidation multifunctional protein (726 aa).

This sequence in the N-terminal section; belongs to the enoyl-CoA hydratase/isomerase family. In the central section; belongs to the 3-hydroxyacyl-CoA dehydrogenase family. As to quaternary structure, monomer.

It is found in the peroxisome. The protein localises to the cytoplasm. Its subcellular location is the cytoskeleton. The enzyme catalyses a (3S)-3-hydroxyacyl-CoA = a (2E)-enoyl-CoA + H2O. The catalysed reaction is a 4-saturated-(3S)-3-hydroxyacyl-CoA = a (3E)-enoyl-CoA + H2O. It catalyses the reaction a (3Z)-enoyl-CoA = a 4-saturated (2E)-enoyl-CoA. It carries out the reaction a (3E)-enoyl-CoA = a 4-saturated (2E)-enoyl-CoA. The enzyme catalyses (3S)-3-hydroxybutanoyl-CoA = (3R)-3-hydroxybutanoyl-CoA. The catalysed reaction is a (3S)-3-hydroxyacyl-CoA + NAD(+) = a 3-oxoacyl-CoA + NADH + H(+). It functions in the pathway lipid metabolism; fatty acid beta-oxidation. Functionally, multifunctional enzyme involved in fatty acid beta-oxidation. Also binds to RNA and microtubules. Possible role in subcellular mRNA localization and RNA-cytoskeleton interactions. The chain is Peroxisomal fatty acid beta-oxidation multifunctional protein (MFP) from Oryza sativa subsp. japonica (Rice).